A 319-amino-acid chain; its full sequence is L-tryptophan isonitrile synthase AmbI1 (319 aa).

This sequence belongs to the isocyanide synthase family.

The catalysed reaction is D-ribulose 5-phosphate + L-tryptophan = (2S)-3-(1H-indol-3-yl)-2-isocyanopropanoate + hydroxyacetone + formaldehyde + phosphate + H2O + H(+). Functionally, involved in the biosynthesis of ambiguines, a family of hapalindole-type alkaloids. Responsible for the synthesis of the isonitrile group on tryptophan using ribulose 5-phosphate as the source of the carbon atom. This Fischerella ambigua (strain UTEX 1903) protein is L-tryptophan isonitrile synthase AmbI1.